Reading from the N-terminus, the 157-residue chain is Regenerating islet-derived protein 4 (157 aa).

The first 22 residues, 1–22 (MASKGVRLLLLLSWVAGPEVLS), serve as a signal peptide directing secretion. Cys29 and Cys40 are oxidised to a cystine. In terms of domain architecture, C-type lectin spans 36–154 (YRSHCYGYFR…CANRQHFLCK (119 aa)). N-linked (GlcNAc...) asparagine glycans are attached at residues Asn49 and Asn62. Disulfide bonds link Cys57–Cys153 and Cys128–Cys145. A carbohydrate is bound by residues 97-102 (DPQKKQ) and 134-136 (KDK).

It is found in the secreted. Its function is as follows. Calcium-independent lectin displaying mannose-binding specificity and able to maintain carbohydrate recognition activity in an acidic environment. May be involved in inflammatory and metaplastic responses of the gastrointestinal epithelium. The sequence is that of Regenerating islet-derived protein 4 (Reg4) from Mus musculus (Mouse).